The chain runs to 629 residues: DNA-directed RNA polymerase subunit beta' (629 aa).

Residues Cys-70, Cys-72, Cys-85, and Cys-88 each contribute to the Zn(2+) site. Residues Asp-472, Asp-474, and Asp-476 each contribute to the Mg(2+) site.

Belongs to the RNA polymerase beta' chain family. RpoC1 subfamily. In plastids the minimal PEP RNA polymerase catalytic core is composed of four subunits: alpha, beta, beta', and beta''. When a (nuclear-encoded) sigma factor is associated with the core the holoenzyme is formed, which can initiate transcription. The cofactor is Mg(2+). Requires Zn(2+) as cofactor.

Its subcellular location is the plastid. The protein resides in the chloroplast. It catalyses the reaction RNA(n) + a ribonucleoside 5'-triphosphate = RNA(n+1) + diphosphate. In terms of biological role, DNA-dependent RNA polymerase catalyzes the transcription of DNA into RNA using the four ribonucleoside triphosphates as substrates. The polypeptide is DNA-directed RNA polymerase subunit beta' (Porphyra purpurea (Red seaweed)).